The chain runs to 319 residues: tRNA(Ile)-lysidine synthase (319 aa).

Serine 32–serine 37 contacts ATP.

Belongs to the tRNA(Ile)-lysidine synthase family.

It is found in the cytoplasm. It carries out the reaction cytidine(34) in tRNA(Ile2) + L-lysine + ATP = lysidine(34) in tRNA(Ile2) + AMP + diphosphate + H(+). Functionally, ligates lysine onto the cytidine present at position 34 of the AUA codon-specific tRNA(Ile) that contains the anticodon CAU, in an ATP-dependent manner. Cytidine is converted to lysidine, thus changing the amino acid specificity of the tRNA from methionine to isoleucine. This is tRNA(Ile)-lysidine synthase from Chlamydia pneumoniae (Chlamydophila pneumoniae).